Reading from the N-terminus, the 392-residue chain is 1-deoxy-D-xylulose 5-phosphate reductoisomerase (392 aa).

Residues T10, G11, S12, I13, N38, and N124 each contribute to the NADPH site. K125 serves as a coordination point for 1-deoxy-D-xylulose 5-phosphate. E126 is a binding site for NADPH. D150 lines the Mn(2+) pocket. S151, E152, S176, and H199 together coordinate 1-deoxy-D-xylulose 5-phosphate. E152 provides a ligand contact to Mn(2+). G205 is a binding site for NADPH. Residues S212, N217, K218, and E221 each coordinate 1-deoxy-D-xylulose 5-phosphate. A Mn(2+)-binding site is contributed by E221.

This sequence belongs to the DXR family. Mg(2+) serves as cofactor. The cofactor is Mn(2+).

The catalysed reaction is 2-C-methyl-D-erythritol 4-phosphate + NADP(+) = 1-deoxy-D-xylulose 5-phosphate + NADPH + H(+). Its pathway is isoprenoid biosynthesis; isopentenyl diphosphate biosynthesis via DXP pathway; isopentenyl diphosphate from 1-deoxy-D-xylulose 5-phosphate: step 1/6. Catalyzes the NADPH-dependent rearrangement and reduction of 1-deoxy-D-xylulose-5-phosphate (DXP) to 2-C-methyl-D-erythritol 4-phosphate (MEP). This chain is 1-deoxy-D-xylulose 5-phosphate reductoisomerase, found in Gloeobacter violaceus (strain ATCC 29082 / PCC 7421).